Consider the following 161-residue polypeptide: Phosphopantetheine adenylyltransferase (161 aa).

Ser10 contacts substrate. ATP contacts are provided by residues 10–11 and His18; that span reads SF. Substrate is bound by residues Lys42, Ala75, and Arg89. ATP-binding positions include 90–92, Glu100, and 125–131; these read GLR and LSPISSS.

It belongs to the bacterial CoaD family. Homohexamer. Mg(2+) serves as cofactor.

The protein localises to the cytoplasm. The enzyme catalyses (R)-4'-phosphopantetheine + ATP + H(+) = 3'-dephospho-CoA + diphosphate. The protein operates within cofactor biosynthesis; coenzyme A biosynthesis; CoA from (R)-pantothenate: step 4/5. Reversibly transfers an adenylyl group from ATP to 4'-phosphopantetheine, yielding dephospho-CoA (dPCoA) and pyrophosphate. The sequence is that of Phosphopantetheine adenylyltransferase from Streptococcus agalactiae serotype Ia (strain ATCC 27591 / A909 / CDC SS700).